Reading from the N-terminus, the 290-residue chain is Protease HtpX homolog (290 aa).

2 helical membrane-spanning segments follow: residues 5-27 and 32-51; these read MWLR…GYLF and VAFI…YWYS. Histidine 133 lines the Zn(2+) pocket. Glutamate 134 is an active-site residue. Histidine 137 lines the Zn(2+) pocket. Helical transmembrane passes span 143-163 and 182-202; these read ILIG…AYWA and IIGA…IQAA. Position 208 (glutamate 208) interacts with Zn(2+).

Belongs to the peptidase M48B family. It depends on Zn(2+) as a cofactor.

It localises to the cell membrane. This chain is Protease HtpX homolog, found in Thermococcus kodakarensis (strain ATCC BAA-918 / JCM 12380 / KOD1) (Pyrococcus kodakaraensis (strain KOD1)).